A 347-amino-acid polypeptide reads, in one-letter code: E3 ubiquitin-protein ligase ARK2C (347 aa).

Disordered stretches follow at residues 23–79 and 268–289; these read PFQR…GTLH and PHKYKKRRPQDSKGKKDEGEES. Residues 267 to 269 are ubiquitin binding; sequence FPH. Positions 276 to 285 are enriched in basic and acidic residues; it reads PQDSKGKKDE. Residues cysteine 295 and cysteine 298 each coordinate Zn(2+). Residues 295-336 form an RING-type; atypical zinc finger; the sequence is CTICLSMLEDGEDVRRLPCMHLFHQLCVDQWLAMSKKCPICR. Positions 310–314 are ubiquitin binding; the sequence is RLPCM. Residues histidine 318 and cysteine 321 each coordinate Zn(2+).

The protein belongs to the Arkadia family. As to quaternary structure, monomer; binding to the ubiquitin-conjugating enzyme E2 does not trigger homodimerization. In terms of tissue distribution, expressed in neurons of the nervous system.

The protein localises to the nucleus. It carries out the reaction S-ubiquitinyl-[E2 ubiquitin-conjugating enzyme]-L-cysteine + [acceptor protein]-L-lysine = [E2 ubiquitin-conjugating enzyme]-L-cysteine + N(6)-ubiquitinyl-[acceptor protein]-L-lysine.. Binds free ubiquitin non-covalently via its RING-type zinc finger. Ubiquitin-binding leads to enhance the E3 ubiquitin-protein ligase activity by stabilizing the ubiquitin-conjugating enzyme E2 (donor ubiquitin) in the 'closed' conformation and activating ubiquitin transfer. Functionally, E3 ubiquitin-protein ligase that acts as a regulator of motor axon elongation. Required for efficient motor axon extension in the dorsal forelimb by enhancing the transcriptional responses of the SMAD1/SMAD5/SMAD8 effectors, which are activated downstream of BMP. Acts by mediating ubiquitination and degradation of SMAD inhibitors such as SMAD6, SMAD7, SKI and SNON isoform of SKIL. The sequence is that of E3 ubiquitin-protein ligase ARK2C from Mus musculus (Mouse).